A 39-amino-acid chain; its full sequence is Potassium channel toxin alpha-KTx 2.1 (39 aa).

Cystine bridges form between Cys7–Cys29, Cys13–Cys34, and Cys17–Cys36. Residues 26–34 form an interaction with Ca(2+)-activated K(+) channels region; sequence GAKCMNGKC. Asn39 is subject to Asparagine amide.

This sequence belongs to the short scorpion toxin superfamily. Potassium channel inhibitor family. Alpha-KTx 02 subfamily. As to expression, expressed by the venom gland.

It is found in the secreted. Blocks voltage-gated potassium channels (mKv1.1/KCNA1 (Kd&gt;25 nM), rKv1.2/KCNA2 (Kd=2 nM), mKv1.3/KCNA3 (Kd=1 nM), hKv1.5/KCNA5 (Kd&gt;25 nM) and mKv3.1/KCNC1 (Kd&gt;25 nM)) and calcium-activated potassium channels (KCa1.1/KCNMA1 and KCa3.1/KCNN4, Kd&gt;25 nM). The protein is Potassium channel toxin alpha-KTx 2.1 of Centruroides noxius (Mexican scorpion).